A 372-amino-acid chain; its full sequence is Glutamate 5-kinase (372 aa).

An ATP-binding site is contributed by Lys-14. 3 residues coordinate substrate: Ser-54, Asp-141, and Asn-153. Thr-173–Asp-174 lines the ATP pocket. One can recognise a PUA domain in the interval Arg-280–Val-358.

This sequence belongs to the glutamate 5-kinase family.

It localises to the cytoplasm. The catalysed reaction is L-glutamate + ATP = L-glutamyl 5-phosphate + ADP. The protein operates within amino-acid biosynthesis; L-proline biosynthesis; L-glutamate 5-semialdehyde from L-glutamate: step 1/2. Its function is as follows. Catalyzes the transfer of a phosphate group to glutamate to form L-glutamate 5-phosphate. The chain is Glutamate 5-kinase from Pseudomonas paraeruginosa (strain DSM 24068 / PA7) (Pseudomonas aeruginosa (strain PA7)).